The following is a 305-amino-acid chain: Alpha-N-acetylgalactosaminide alpha-2,6-sialyltransferase 3 (305 aa).

The Cytoplasmic portion of the chain corresponds to Met1 to Lys8. The helical; Signal-anchor for type II membrane protein transmembrane segment at Ser9–Val28 threads the bilayer. Topologically, residues Asn29–Ser305 are lumenal. A disulfide bridge links Cys80 with Cys229. Residues Asn148, Asn239, and Asn301 are each glycosylated (N-linked (GlcNAc...) asparagine).

It belongs to the glycosyltransferase 29 family. Expressed in brain and kidney. Observed in the epithelium of the proximal tubules, marginal expression was also found in the distal tubules and collecting tubules.

The protein localises to the golgi apparatus membrane. The catalysed reaction is an alpha-Neu5Ac-(2-&gt;3)-beta-D-Gal-(1-&gt;3)-D-GlcNAc derivative + CMP-N-acetyl-beta-neuraminate = an alpha-Neu5Ac-(2-&gt;3)-beta-D-Gal-(1-&gt;3)-[alpha-Neu5Ac-(2-&gt;6)]-D-GlcNAc derivative + CMP + H(+). It catalyses the reaction a ganglioside GM1b (d18:1(4E)) + CMP-N-acetyl-beta-neuraminate = a ganglioside GD1alpha (d18:1(4E)) + CMP + H(+). The enzyme catalyses a globoside MSGG + CMP-N-acetyl-beta-neuraminate = a globoside DSGG + CMP + H(+). It carries out the reaction 3-O-[alpha-Neu5Ac-(2-&gt;3)-beta-D-Gal-(1-&gt;3)-alpha-D-GalNAc]-L-Ser-[protein] + CMP-N-acetyl-beta-neuraminate = a 3-O-{alpha-Neu5Ac-(2-&gt;3)-beta-D-Gal-(1-&gt;3)-[alpha-Neu5Ac-(2-&gt;6)]-alpha-D-GalNAc}-L-seryl-[protein] + CMP + H(+). The catalysed reaction is 3-O-[alpha-Neu5Ac-(2-&gt;3)-beta-D-Gal-(1-&gt;3)-alpha-D-GalNAc]-L-Thr-[protein] + CMP-N-acetyl-beta-neuraminate = a 3-O-{alpha-Neu5Ac-(2-&gt;3)-beta-D-Gal-(1-&gt;3)-[alpha-Neu5Ac-(2-&gt;6)]-alpha-D-GalNAc}-L-threonyl-[protein] + CMP + H(+). Its pathway is protein modification; protein glycosylation. The protein operates within glycolipid biosynthesis. Transfers the sialyl group (N-acetyl-alpha-neuraminyl or NeuAc) from CMP-NeuAc to the GalNAc residue on the NeuAc-alpha-2,3-Gal-beta-1,3-GalNAc sequence of glycoproteins and glycolipids forming an alpha-2,6-linkage. Produces branched type disialyl structures by transfer of a sialyl group onto a GalNAc residue inside the backbone core chains. ST6GalNAcIII prefers glycolipids to glycoproteins, predominantly catalyzing the biosynthesis of ganglioside GD1alpha from GM1b. GD1alpha is a critical molecule in the communication and interaction between neuronal cells and their supportive cells, particularly in brain tissues, and functions as an adhesion molecule in the process of metastasis. Sialylation of glycoproteins or glycosphingolipids is very important in tumor development, neuronal development, nerve repair, immunological processes and regulation of hormone sensitivity. This chain is Alpha-N-acetylgalactosaminide alpha-2,6-sialyltransferase 3 (ST6GALNAC3), found in Homo sapiens (Human).